Consider the following 396-residue polypeptide: MQDSSLNNYANHKNFILMLIILFLMEFARGMYILSYINFLPTVTSIAVAITSLAFSIHFIADASTNFVIGFLLKKFGTKIVLTTGFILAFTSLFLVIWFPASPFVIIFSAMMLGIAVSPIWVIMLSSVEEDKRGKQMGYVYFSWLLGLLVGMVFMNLLIKVHPTRFAFMMSLVVLIAWILYYFVDVKLTNYNTRPVKAQLRQIVDVTKRHLLLFPGILLQGAAIAALVPILPTYATKVINVSTIEYTVAIIIGGIGCAVSMLFLSKLIDNRSRNFMYGVILSGFILYMILIFTLSMIVNIHILWIIALAIGLMYGILLPAWNTFMARFIKSDEQEETWGVFNSIQGFGSMIGPLFGGLITQFTNNLNNTFYFSALIFLVLAVFYGSYFIVNREKAK.

A run of 12 helical transmembrane segments spans residues 15-34 (FILM…MYIL), 46-73 (IAVA…GFLL), 80-99 (IVLT…VIWF), 105-126 (VIIF…IMLS), 138-159 (GYVY…NLLI), 165-184 (RFAF…YYFV), 211-231 (LLLF…VPIL), 243-263 (TIEY…SMLF), 275-297 (FMYG…LSMI), 303-326 (LWII…TFMA), 338-358 (WGVF…FGGL), and 370-390 (FYFS…YFIV).

The protein belongs to the major facilitator superfamily. LtaA family.

Its subcellular location is the cell membrane. It functions in the pathway cell wall biogenesis; lipoteichoic acid biosynthesis. Its function is as follows. Proton-coupled antiporter flippase that catalyzes the translocation, from the inner to the outer leaflet of the cell membrane, of the lipid-linked disaccharide (anchor-LLD) that anchors lipoteichoic acids (LTA) to the cell membrane. This Staphylococcus aureus (strain USA300) protein is Proton-coupled antiporter flippase LtaA (ltaA).